A 175-amino-acid chain; its full sequence is Nucleoside triphosphate/diphosphate phosphatase (175 aa).

The active-site Proton donor is R23. Residues N87, D103, D105, D107, D120, and E123 each coordinate Mg(2+).

This sequence belongs to the Ntdp family. Mg(2+) serves as cofactor.

It carries out the reaction a ribonucleoside 5'-triphosphate + H2O = a ribonucleoside 5'-diphosphate + phosphate + H(+). It catalyses the reaction a ribonucleoside 5'-diphosphate + H2O = a ribonucleoside 5'-phosphate + phosphate + H(+). Functionally, has nucleoside phosphatase activity towards nucleoside triphosphates and nucleoside diphosphates. The protein is Nucleoside triphosphate/diphosphate phosphatase of Halalkalibacterium halodurans (strain ATCC BAA-125 / DSM 18197 / FERM 7344 / JCM 9153 / C-125) (Bacillus halodurans).